We begin with the raw amino-acid sequence, 194 residues long: MGMYKYIREAWKSPKKSYVGELLKKRMIKWRREPVVVRIERPTRLDRARSLGYQAKQGYVVVRVRVRRGGRKRPRWKGGRKPSKMGMVKYSPKKSLQWIAEEKAARKFPNLEVLNSYWVGEDGMYKWFEVIMVDPHHPVIKSDPKIAWITGKAHKGRVFRGLTSAGKKGRGLRNKGKGAEKVRPSVRANKGKTK.

Residues Ser164–Lys194 are disordered. A compositionally biased stretch (basic residues) spans Lys167–Gly176.

It belongs to the eukaryotic ribosomal protein eL15 family.

This chain is Large ribosomal subunit protein eL15, found in Thermococcus gammatolerans (strain DSM 15229 / JCM 11827 / EJ3).